The following is a 120-amino-acid chain: Small ribosomal subunit protein bS16 (120 aa).

Positions 81-120 (GLAKRPARNNPQKAEPGEKAKERAAKRAEKAAAPAEDAAA) are disordered. Basic and acidic residues predominate over residues 95 to 110 (EPGEKAKERAAKRAEK). Over residues 111–120 (AAAPAEDAAA) the composition is skewed to low complexity.

Belongs to the bacterial ribosomal protein bS16 family.

This chain is Small ribosomal subunit protein bS16, found in Methylobacterium radiotolerans (strain ATCC 27329 / DSM 1819 / JCM 2831 / NBRC 15690 / NCIMB 10815 / 0-1).